The sequence spans 349 residues: MTVELPSTQRALVFDTWNGPLEVRQVPVPSPADDEILVKIEYSGICHSDLHVWLGDLKDMSVCPLVGGHEGAGSVVQIGKNVTGWQLGDKAGVKLMNFNCLNCEFCKKGHEPLCHHIQNYGFDRSGTFQEYLTIRGVDAAKINKDTNLAAAAPILCAGVTVYKALKESNVAPGQIIVLTGAGGGLGSLAIQYACAMGMRVVAMDHGSKEAHCKGLGAEWFVDAFETPDIVSHITKLTEGGPHGVINFAVARKPMEQAVEYVRKRGTVVFVGLPKDSKVTFDTTPFIFNAITIKGSIVGSRLDVDEAMEFVTRGIVKVPLELVKLEDVPAVYQRMLDGKINSRAVVDFSL.

Zn(2+) is bound by residues Cys46, His69, Cys100, Cys103, Cys106, Cys114, and Cys156. NAD(+) contacts are provided by residues Gly180–Gly186, Asp204, Lys208, Val270–Leu272, and Arg342.

Belongs to the zinc-containing alcohol dehydrogenase family. Homotetramer. The cofactor is Zn(2+).

It carries out the reaction a primary alcohol + NAD(+) = an aldehyde + NADH + H(+). It catalyses the reaction a secondary alcohol + NAD(+) = a ketone + NADH + H(+). In Caenorhabditis elegans, this protein is Alcohol dehydrogenase 1.